Reading from the N-terminus, the 1263-residue chain is DNA-directed RNA polymerase subunit beta (1263 aa).

Belongs to the RNA polymerase beta chain family. In terms of assembly, the RNAP catalytic core consists of 2 alpha, 1 beta, 1 beta' and 1 omega subunit. When a sigma factor is associated with the core the holoenzyme is formed, which can initiate transcription.

It catalyses the reaction RNA(n) + a ribonucleoside 5'-triphosphate = RNA(n+1) + diphosphate. DNA-dependent RNA polymerase catalyzes the transcription of DNA into RNA using the four ribonucleoside triphosphates as substrates. The chain is DNA-directed RNA polymerase subunit beta from Thermotoga petrophila (strain ATCC BAA-488 / DSM 13995 / JCM 10881 / RKU-1).